The chain runs to 207 residues: Probable RNA 2'-phosphotransferase (207 aa).

The protein belongs to the KptA/TPT1 family.

Functionally, removes the 2'-phosphate from RNA via an intermediate in which the phosphate is ADP-ribosylated by NAD followed by a presumed transesterification to release the RNA and generate ADP-ribose 1''-2''-cyclic phosphate (APPR&gt;P). May function as an ADP-ribosylase. This chain is Probable RNA 2'-phosphotransferase, found in Methanosarcina mazei (strain ATCC BAA-159 / DSM 3647 / Goe1 / Go1 / JCM 11833 / OCM 88) (Methanosarcina frisia).